The primary structure comprises 512 residues: Dihydroniloticin synthase CYP71CD2 (512 aa).

Residues 1–21 (MNLQLDYFSITSFLVFLVVLF) traverse the membrane as a helical segment. Asn436 serves as a coordination point for heme.

Belongs to the cytochrome P450 family. Heme serves as cofactor. As to expression, mainly expressed in petioles and roots, and, to a lower extent, in leaves.

The protein localises to the membrane. It catalyses the reaction tirucalla-7,24-dien-3beta-ol + 2 reduced [NADPH--hemoprotein reductase] + 2 O2 = dihydroniloticin + 2 oxidized [NADPH--hemoprotein reductase] + 2 H2O + 2 H(+). The protein operates within secondary metabolite biosynthesis; terpenoid biosynthesis. Its function is as follows. Monooxygenase involved in the biosynthesis of limonoids triterpene natural products such as azadirachtin, an antifeedant widely used as bioinsecticide, and possessing many medicinal applications including anti-tumoral, anti-malarial, anti-rheumatic, antibacterial, anti-inflammatory, anti-pyretic and diuretic effects. Catalyzes the conversion of tirucalladienol to dihydroniloticin. This chain is Dihydroniloticin synthase CYP71CD2, found in Melia azedarach (Chinaberry tree).